Reading from the N-terminus, the 236-residue chain is uncharacterized protein (236 aa).

A signal peptide spans 1 to 26 (MTNTWNRLALLIFAVLSLLVAGELQA).

This sequence belongs to the periplasmic pilus chaperone family.

It is found in the periplasm. Its function is as follows. Part of the elfADCG-ycbUVF fimbrial operon, which promotes adhesion of bacteria to different abiotic surfaces. Could be required for the biogenesis of fimbriae. This is an uncharacterized protein from Escherichia coli (strain K12).